The following is a 776-amino-acid chain: Intermediate filament protein ifp-1 (776 aa).

The head stretch occupies residues 1–23 (MDSANARDCLLHLARAKLSERQD). The IF rod domain maps to 20 to 371 (ERQDLVQLND…ELLDRSGDPR (352 aa)). The tract at residues 24 to 55 (LVQLNDQFVDIIEHVHYMEAEHTALEHDYNLL) is coil 1A. Positions 56 to 69 (KSGVQSDSSGINEI) are linker 1. The tract at residues 70 to 207 (YNVEIRTVRS…EDNKKIIMNE (138 aa)) is coil 1B. Positions 208–224 (HKYFVRDRNADRHVFRD) are linker 12. Residues 225–620 (QLRKAIADIR…QRGPHHSSYH (396 aa)) are coil 2. 2 disordered regions span residues 453 to 473 (ASPI…DSRS) and 518 to 544 (NTTQ…SERR). The span at 518–536 (NTTQINNPYASRTPTSSVN) shows a compositional bias: polar residues. The interval 621–768 (AATGSVSNSI…WFVYTSNTEI (148 aa)) is tail. An LTD domain is found at 653 to 764 (NFQRFTRWYK…EVKSWFVYTS (112 aa)).

It belongs to the intermediate filament family.

It localises to the cytoplasm. Cytoplasmic intermediate filaments provide mechanical strength to cells. Not essential protein. This Caenorhabditis elegans protein is Intermediate filament protein ifp-1 (ifp-1).